The chain runs to 341 residues: Putative amino-acid ABC transporter-binding protein YhdW (341 aa).

Positions 1 to 19 are cleaved as a signal peptide; the sequence is MKKMMIATLAAASVLLAVA.

This sequence belongs to the bacterial solute-binding protein 3 family.

The protein resides in the periplasm. In terms of biological role, probably part of the binding-protein-dependent transport system YdhWXYZ for an amino acid. This is Putative amino-acid ABC transporter-binding protein YhdW (yhdW) from Escherichia coli (strain K12).